Here is a 431-residue protein sequence, read N- to C-terminus: Dual-specificity RNA methyltransferase RlmN (431 aa).

The segment at 1–26 (MATASLDTARPERRAGSDPFIEKTPE) is disordered. Residues 9-26 (ARPERRAGSDPFIEKTPE) show a composition bias toward basic and acidic residues. E138 acts as the Proton acceptor in catalysis. Residues 144-394 (ANDRGTLCVS…VRTPRGRDIL (251 aa)) enclose the Radical SAM core domain. A disulfide bond links C151 and C397. C158, C162, and C165 together coordinate [4Fe-4S] cluster. Residues 223 to 224 (GE), S255, 277 to 279 (SLH), and N354 each bind S-adenosyl-L-methionine. C397 serves as the catalytic S-methylcysteine intermediate.

Belongs to the radical SAM superfamily. RlmN family. Requires [4Fe-4S] cluster as cofactor.

The protein localises to the cytoplasm. It carries out the reaction adenosine(2503) in 23S rRNA + 2 reduced [2Fe-2S]-[ferredoxin] + 2 S-adenosyl-L-methionine = 2-methyladenosine(2503) in 23S rRNA + 5'-deoxyadenosine + L-methionine + 2 oxidized [2Fe-2S]-[ferredoxin] + S-adenosyl-L-homocysteine. It catalyses the reaction adenosine(37) in tRNA + 2 reduced [2Fe-2S]-[ferredoxin] + 2 S-adenosyl-L-methionine = 2-methyladenosine(37) in tRNA + 5'-deoxyadenosine + L-methionine + 2 oxidized [2Fe-2S]-[ferredoxin] + S-adenosyl-L-homocysteine. Functionally, specifically methylates position 2 of adenine 2503 in 23S rRNA and position 2 of adenine 37 in tRNAs. m2A2503 modification seems to play a crucial role in the proofreading step occurring at the peptidyl transferase center and thus would serve to optimize ribosomal fidelity. This is Dual-specificity RNA methyltransferase RlmN from Methylobacterium sp. (strain 4-46).